The sequence spans 1388 residues: DNA-directed RNA polymerase subunit beta (1388 aa).

Belongs to the RNA polymerase beta chain family. As to quaternary structure, the RNAP catalytic core consists of 2 alpha, 1 beta, 1 beta' and 1 omega subunit. When a sigma factor is associated with the core the holoenzyme is formed, which can initiate transcription.

The catalysed reaction is RNA(n) + a ribonucleoside 5'-triphosphate = RNA(n+1) + diphosphate. Functionally, DNA-dependent RNA polymerase catalyzes the transcription of DNA into RNA using the four ribonucleoside triphosphates as substrates. The polypeptide is DNA-directed RNA polymerase subunit beta (Xylella fastidiosa (strain 9a5c)).